The following is a 327-amino-acid chain: E3 ubiquitin-protein ligase SINAT4 (327 aa).

The disordered stretch occupies residues 1–27; sequence METDSMECVSSTGNEIHQNGNGHQSYQ. The segment covering 8-27 has biased composition (polar residues); it reads CVSSTGNEIHQNGNGHQSYQ. The RING-type zinc-finger motif lies at 64–100; sequence CPVCTYSMYPPIHQCHNGHTLCSTCKVRVHNRCPTCR. The tract at residues 114-307 is SBD; sequence VAESLELPCK…KELKLRVTGK (194 aa). Residues 117–177 form an SIAH-type zinc finger; that stretch reads SLELPCKFYN…LVAHLRDDHK (61 aa). 8 residues coordinate Zn(2+): Cys122, Cys129, His141, Cys145, Cys152, Cys159, His171, and His176.

Belongs to the SINA (Seven in absentia) family. In terms of assembly, interacts with SINAT6. Interacts with WAV3. Interacts with FREE1. Interacts with ELC/VPS23A.

Its subcellular location is the endosome. The protein localises to the multivesicular body. It is found in the cytoplasmic vesicle. The protein resides in the autophagosome. It catalyses the reaction S-ubiquitinyl-[E2 ubiquitin-conjugating enzyme]-L-cysteine + [acceptor protein]-L-lysine = [E2 ubiquitin-conjugating enzyme]-L-cysteine + N(6)-ubiquitinyl-[acceptor protein]-L-lysine.. Its pathway is protein modification; protein ubiquitination. E3 ubiquitin-protein ligase that mediates ubiquitination and subsequent proteasomal degradation of target proteins. E3 ubiquitin ligases accept ubiquitin from an E2 ubiquitin-conjugating enzyme in the form of a thioester and then directly transfers the ubiquitin to targeted substrates. It probably triggers the ubiquitin-mediated degradation of different substrates. Modulates directly the ubiquitination and proteasomal-dependent degradation of FREE1, a component of the ESCRT-I complex. Modulates directly the ubiquitination and proteasomal-dependent degradation of ELC/VPS23A, a component of the ESCRT-I complex. This chain is E3 ubiquitin-protein ligase SINAT4, found in Arabidopsis thaliana (Mouse-ear cress).